The following is a 300-amino-acid chain: Probable lipid kinase YegS-like (300 aa).

The DAGKc domain maps to 1–129; it reads MSKKALLILH…CDVIRVNNHY (129 aa). ATP is bound by residues Thr38, 64-70, and Thr92; that span reads GDGSVRD. Mg(2+) is bound by residues Leu210, Asp213, and Leu215. The Proton acceptor role is filled by Glu272.

The protein belongs to the diacylglycerol/lipid kinase family. YegS lipid kinase subfamily. Mg(2+) serves as cofactor. Ca(2+) is required as a cofactor.

The protein localises to the cytoplasm. Its function is as follows. Probably phosphorylates lipids; the in vivo substrate is unknown. The sequence is that of Probable lipid kinase YegS-like from Alcanivorax borkumensis (strain ATCC 700651 / DSM 11573 / NCIMB 13689 / SK2).